A 297-amino-acid polypeptide reads, in one-letter code: HTH-type transcriptional regulator ArgP (297 aa).

The 57-residue stretch at 4-60 (PDYRTLQALDAVIRERGFERAAQKLCITQSAVSQRIKQLENMFGQPLLVRTVPPRPT) folds into the HTH lysR-type domain. Residues 21 to 40 (FERAAQKLCITQSAVSQRIK) constitute a DNA-binding region (H-T-H motif).

It belongs to the LysR transcriptional regulatory family. Homodimer.

In terms of biological role, controls the transcription of genes involved in arginine and lysine metabolism. The protein is HTH-type transcriptional regulator ArgP of Enterobacter sp. (strain 638).